A 418-amino-acid polypeptide reads, in one-letter code: Tyrosine--tRNA ligase (418 aa).

An L-tyrosine-binding site is contributed by Tyr-34. The 'HIGH' region motif lies at 39-48 (PTADSLHLGH). L-tyrosine-binding residues include Tyr-169 and Gln-173. A 'KMSKS' region motif is present at residues 229–233 (KFGKS). Residue Lys-232 coordinates ATP. In terms of domain architecture, S4 RNA-binding spans 352-418 (LNIVEILVSS…GKKKYAVLTY (67 aa)).

It belongs to the class-I aminoacyl-tRNA synthetase family. TyrS type 1 subfamily. Homodimer.

It is found in the cytoplasm. The enzyme catalyses tRNA(Tyr) + L-tyrosine + ATP = L-tyrosyl-tRNA(Tyr) + AMP + diphosphate + H(+). Its function is as follows. Catalyzes the attachment of tyrosine to tRNA(Tyr) in a two-step reaction: tyrosine is first activated by ATP to form Tyr-AMP and then transferred to the acceptor end of tRNA(Tyr). This chain is Tyrosine--tRNA ligase, found in Streptococcus uberis (strain ATCC BAA-854 / 0140J).